The chain runs to 132 residues: uncharacterized protein (132 aa).

The first 17 residues, 1-17 (MCPECFFLMLFFCGYRA), serve as a signal peptide directing secretion. Residues 25-39 (SSSSSSSSSSSFRSS) are compositionally biased toward low complexity. A disordered region spans residues 25–79 (SSSSSSSSSSSFRSSPAYGFSGRPPGGAGCRERSQRSCLRPGGLPSLTRNPGLQR).

This is an uncharacterized protein from Escherichia coli (strain K12).